Here is a 250-residue protein sequence, read N- to C-terminus: Thioesterase FPSE_09186 (250 aa).

The protein belongs to the AMT4 thioesterase family.

Its pathway is secondary metabolite biosynthesis. In terms of biological role, thioesterase; part of the gene cluster that mediates the biosynthesis of the lipopeptides W493 A and B. W493 A and B consist of six amino acid residues D-allo-thr, L-Ala, D-Ala, L-Gln, D-Tyr, and L-Val/L-Ile linked to a 3-hydroxy-4-methyltetradecanoic acid polyketide chain. The biosynthesis starts with formation of the linear polyketide chain by the highly reducing polyketide synthase PKS40. The gene cluster contains a putative acyl-CoA ligase (FPSE_09184) for formation of a CoA thioester polyketide. The thiol bond could be hydrolyzed by the putative thioesterase (FPSE_09186) and then accepted by the first T domain in module 1 of NRPS32. The second T domain is responsible for accepting a threonine, which is adenylated by the A domain and epimerized to the D-allo-threonine formed by the E domain. The five successive modules incorporate Ala, Ala, Gln, Tyr, and Val/Ile into the final product, which is released by cyclization. The polypeptide is Thioesterase FPSE_09186 (Fusarium pseudograminearum (strain CS3096) (Wheat and barley crown-rot fungus)).